The chain runs to 954 residues: Valine--tRNA ligase (954 aa).

The short motif at 48–58 (PNVTGSLHMGH) is the 'HIGH' region element. A 'KMSKS' region motif is present at residues 560-564 (KMSKS). Lys563 contacts ATP. Residues 883–953 (AGFINKEAEL…LKQQYLAIEA (71 aa)) adopt a coiled-coil conformation.

Belongs to the class-I aminoacyl-tRNA synthetase family. ValS type 1 subfamily. Monomer.

Its subcellular location is the cytoplasm. It catalyses the reaction tRNA(Val) + L-valine + ATP = L-valyl-tRNA(Val) + AMP + diphosphate. Catalyzes the attachment of valine to tRNA(Val). As ValRS can inadvertently accommodate and process structurally similar amino acids such as threonine, to avoid such errors, it has a 'posttransfer' editing activity that hydrolyzes mischarged Thr-tRNA(Val) in a tRNA-dependent manner. In Pasteurella multocida (strain Pm70), this protein is Valine--tRNA ligase.